Here is a 149-residue protein sequence, read N- to C-terminus: MNLYGYFLLLIIVIAFIALLPLFSGIGTFKLTKPKSSATAQSATGKLGKREYLKKKLDHTNVLKFDLKDTEESLGHDSASASSASRKFEIDSKTGLKRRVIGQYNKDPNDFDFDIDDLINEDELDERREEEKKLKKYNGKKNEAYEGFV.

Residues 1-6 lie on the Lumenal side of the membrane; the sequence is MNLYGY. Residues 7-27 form a helical; Signal-anchor for type II membrane protein membrane-spanning segment; the sequence is FLLLIIVIAFIALLPLFSGIG. The Cytoplasmic segment spans residues 28–149; that stretch reads TFKLTKPKSS…KKNEAYEGFV (122 aa).

As to quaternary structure, interacts with PMA1 and PSG1.

It is found in the endoplasmic reticulum membrane. Its subcellular location is the cytoplasmic vesicle. It localises to the COPI-coated vesicle membrane. The protein resides in the COPII-coated vesicle membrane. The protein localises to the golgi apparatus membrane. Its function is as follows. Specific cargo receptor protein for the plasma membrane ATPase PMA1 that acts with PSG1 to promote the transport and maturation of PMA1. EXP1 and PSG1 probably act sequentially to promote PMA1 sorting between the ER and the Golgi, with EXP1 promoting PMA1 export from the ER to the Golgi while PSG1 has a role in PMA1 maturation or quality control in the Golgi. This Saccharomyces cerevisiae (strain ATCC 204508 / S288c) (Baker's yeast) protein is ER export of PMA1 protein 1.